A 347-amino-acid chain; its full sequence is MAEQPVDLSDEALAQAVSAASRAFDQASTLDELAKAKTEHLGDRSPIALARQALGSLPKTDRADAGKRVNVARTQAQAGYDDRLAALRAERDAEVLVAERIDVTLPSTRQPVGARHPITILAENVADTFVAMGWELAEGPEVETEQFNFDALNFPPDHPARSEQDTFHIAPDGSRQVLRTHTSPVQVRTLLERELPVYVISIGRTFRTDELDATHTPVFHQVEGLAVDKGLTMAHLRGTLDAFARAQFGPQGRTRFRPHFFPFTEPSAEVDIWFPNKKGGPGWVEWGGCGMVNPNVLRACGIDPEVYSGFAFGMGLERTLQFRNGIPDMRDMVEGDVRFSLPFGVGA.

Position 265 (Glu-265) interacts with Mg(2+).

This sequence belongs to the class-II aminoacyl-tRNA synthetase family. Phe-tRNA synthetase alpha subunit type 1 subfamily. As to quaternary structure, tetramer of two alpha and two beta subunits. Mg(2+) is required as a cofactor.

The protein resides in the cytoplasm. The enzyme catalyses tRNA(Phe) + L-phenylalanine + ATP = L-phenylalanyl-tRNA(Phe) + AMP + diphosphate + H(+). This is Phenylalanine--tRNA ligase alpha subunit from Mycolicibacterium vanbaalenii (strain DSM 7251 / JCM 13017 / BCRC 16820 / KCTC 9966 / NRRL B-24157 / PYR-1) (Mycobacterium vanbaalenii).